Here is a 75-residue protein sequence, read N- to C-terminus: CDC42 small effector protein 2-C (75 aa).

Residues Cys-10 and Cys-11 are each lipidated (S-palmitoyl cysteine). A CRIB domain is found at Ile-29 to Gly-42.

It belongs to the CDC42SE/SPEC family.

The protein resides in the cytoplasm. The protein localises to the cytoskeleton. It is found in the cell membrane. Its function is as follows. Probably involved in the organization of the actin cytoskeleton by acting downstream of CDC42, inducing actin filament assembly. The polypeptide is CDC42 small effector protein 2-C (cdc42se2-c) (Xenopus laevis (African clawed frog)).